Reading from the N-terminus, the 363-residue chain is Chorismate synthase (363 aa).

The NADP(+) site is built by arginine 48 and arginine 54. FMN is bound by residues 125–127 (RSS), 238–239 (NA), glycine 278, 293–297 (KPTSS), and arginine 319.

The protein belongs to the chorismate synthase family. In terms of assembly, homotetramer. FMNH2 is required as a cofactor.

The catalysed reaction is 5-O-(1-carboxyvinyl)-3-phosphoshikimate = chorismate + phosphate. Its pathway is metabolic intermediate biosynthesis; chorismate biosynthesis; chorismate from D-erythrose 4-phosphate and phosphoenolpyruvate: step 7/7. Functionally, catalyzes the anti-1,4-elimination of the C-3 phosphate and the C-6 proR hydrogen from 5-enolpyruvylshikimate-3-phosphate (EPSP) to yield chorismate, which is the branch point compound that serves as the starting substrate for the three terminal pathways of aromatic amino acid biosynthesis. This reaction introduces a second double bond into the aromatic ring system. The sequence is that of Chorismate synthase from Alcanivorax borkumensis (strain ATCC 700651 / DSM 11573 / NCIMB 13689 / SK2).